Here is a 296-residue protein sequence, read N- to C-terminus: Ribosomal RNA small subunit methyltransferase A (296 aa).

S-adenosyl-L-methionine contacts are provided by N32, L34, G59, E80, D105, and N130.

This sequence belongs to the class I-like SAM-binding methyltransferase superfamily. rRNA adenine N(6)-methyltransferase family. RsmA subfamily.

The protein resides in the cytoplasm. The enzyme catalyses adenosine(1518)/adenosine(1519) in 16S rRNA + 4 S-adenosyl-L-methionine = N(6)-dimethyladenosine(1518)/N(6)-dimethyladenosine(1519) in 16S rRNA + 4 S-adenosyl-L-homocysteine + 4 H(+). Functionally, specifically dimethylates two adjacent adenosines (A1518 and A1519) in the loop of a conserved hairpin near the 3'-end of 16S rRNA in the 30S particle. May play a critical role in biogenesis of 30S subunits. The sequence is that of Ribosomal RNA small subunit methyltransferase A from Lactiplantibacillus plantarum (strain ATCC BAA-793 / NCIMB 8826 / WCFS1) (Lactobacillus plantarum).